The chain runs to 134 residues: Profilin-1 (134 aa).

An intrachain disulfide couples Cys-13 to Cys-118. Positions 84-100 (AVIRGKKGSGGITTKKT) match the Involved in PIP2 interaction motif. Residue Thr-114 is modified to Phosphothreonine.

This sequence belongs to the profilin family. Occurs in many kinds of cells as a complex with monomeric actin in a 1:1 ratio. Post-translationally, phosphorylated by MAP kinases.

It localises to the cytoplasm. The protein localises to the cytoskeleton. Its function is as follows. Binds to actin and affects the structure of the cytoskeleton. At high concentrations, profilin prevents the polymerization of actin, whereas it enhances it at low concentrations. This is Profilin-1 from Olea europaea (Common olive).